The following is a 250-amino-acid chain: 2,3-bisphosphoglycerate-dependent phosphoglycerate mutase (250 aa).

Substrate contacts are provided by residues 10-17, 23-24, Arg-62, 89-92, Lys-100, 116-117, and 185-186; these read RHGESQWN, TG, ERHY, RR, and GN. His-11 functions as the Tele-phosphohistidine intermediate in the catalytic mechanism. Glu-89 functions as the Proton donor/acceptor in the catalytic mechanism.

This sequence belongs to the phosphoglycerate mutase family. BPG-dependent PGAM subfamily. Homodimer.

It catalyses the reaction (2R)-2-phosphoglycerate = (2R)-3-phosphoglycerate. It functions in the pathway carbohydrate degradation; glycolysis; pyruvate from D-glyceraldehyde 3-phosphate: step 3/5. Catalyzes the interconversion of 2-phosphoglycerate and 3-phosphoglycerate. In Salmonella agona (strain SL483), this protein is 2,3-bisphosphoglycerate-dependent phosphoglycerate mutase.